The following is an 894-amino-acid chain: Phosphinomethylmalate isomerase (894 aa).

Residues Cys-438, Cys-504, and Cys-507 each contribute to the [4Fe-4S] cluster site.

It belongs to the aconitase/IPM isomerase family. [4Fe-4S] cluster is required as a cofactor.

It carries out the reaction phosphinomethylmalate = phosphinomethylisomalate. The enzyme catalyses phosphinomethylmalate = 2-(phosphinatomethylidene)butanedioate + H2O. It catalyses the reaction 2-(phosphinatomethylidene)butanedioate + H2O = phosphinomethylisomalate. It participates in secondary metabolite biosynthesis; bialaphos biosynthesis. Its function is as follows. Isomerase involved in the biosynthesis of phosphinothricin tripeptide (PTT), also known as bialaphos (BA), a natural-product antibiotic and potent herbicide. Probably catalyzes the isomerization of phosphinomethylmalate to phosphinomethylisomalate. Shows no standard aconitase activity with citrate as a substrate and is not able to complement an acnA mutant. The sequence is that of Phosphinomethylmalate isomerase from Streptomyces viridochromogenes (strain DSM 40736 / JCM 4977 / BCRC 1201 / Tue 494).